The following is a 530-amino-acid chain: Autoinducer-2 kinase (530 aa).

Belongs to the FGGY kinase family.

Its subcellular location is the cytoplasm. The catalysed reaction is (S)-4,5-dihydroxypentane-2,3-dione + ATP = (2S)-2-hydroxy-3,4-dioxopentyl phosphate + ADP + H(+). Functionally, catalyzes the phosphorylation of autoinducer-2 (AI-2) to phospho-AI-2, which subsequently inactivates the transcriptional regulator LsrR and leads to the transcription of the lsr operon. Phosphorylates the ring-open form of (S)-4,5-dihydroxypentane-2,3-dione (DPD), which is the precursor to all AI-2 signaling molecules, at the C5 position. In Salmonella typhimurium (strain LT2 / SGSC1412 / ATCC 700720), this protein is Autoinducer-2 kinase.